An 82-amino-acid polypeptide reads, in one-letter code: Cortexin-1 (82 aa).

A disordered region spans residues 1-20 (MSAPWTLSPEPLPPSTGPPV). Residues 30 to 50 (TVFAFVLCLLVVLVLLMVRCV) traverse the membrane as a helical segment.

The protein belongs to the cortexin family. As to expression, neuron specific.

It localises to the membrane. Functionally, may mediate extracellular or intracellular signaling of cortical neurons during forebrain development. The sequence is that of Cortexin-1 (Ctxn1) from Rattus norvegicus (Rat).